The primary structure comprises 206 residues: MRPLTPRQAEILELIKRNIADTGMPPTRAEIARRLGFKSANAAEEHLKALAKKGCIEIMPGTSRGIKLTQESTEEPDLGLPLIGQVAAGEPILAQEHVEQHYKVDPAMFRPSADFLLRVRGDSMKNIGILEGDLLAVHKIEQARNGQIVVARVEDDVTVKRFEKKGNKVFLHAENEDYSPIEVDLANQSLSIEGLAVGVIRNGDWQ.

Positions arginine 28–lysine 48 form a DNA-binding region, H-T-H motif. Catalysis depends on for autocatalytic cleavage activity residues serine 123 and lysine 160.

It belongs to the peptidase S24 family. As to quaternary structure, homodimer.

The catalysed reaction is Hydrolysis of Ala-|-Gly bond in repressor LexA.. Represses a number of genes involved in the response to DNA damage (SOS response), including recA and lexA. In the presence of single-stranded DNA, RecA interacts with LexA causing an autocatalytic cleavage which disrupts the DNA-binding part of LexA, leading to derepression of the SOS regulon and eventually DNA repair. The protein is LexA repressor of Shewanella pealeana (strain ATCC 700345 / ANG-SQ1).